The sequence spans 380 residues: Cytochrome b (380 aa).

Transmembrane regions (helical) follow at residues F34–M54, W78–I99, W114–L134, and F179–T199. Residues H84 and H98 each coordinate heme b. Residues H183 and H197 each coordinate heme b. Position 202 (H202) interacts with a ubiquinone. Helical transmembrane passes span L227–S247, L289–H309, I321–S341, and F348–P368.

This sequence belongs to the cytochrome b family. In terms of assembly, the cytochrome bc1 complex contains 11 subunits: 3 respiratory subunits (MT-CYB, CYC1 and UQCRFS1), 2 core proteins (UQCRC1 and UQCRC2) and 6 low-molecular weight proteins (UQCRH/QCR6, UQCRB/QCR7, UQCRQ/QCR8, UQCR10/QCR9, UQCR11/QCR10 and a cleavage product of UQCRFS1). This cytochrome bc1 complex then forms a dimer. The cofactor is heme b.

It is found in the mitochondrion inner membrane. Its function is as follows. Component of the ubiquinol-cytochrome c reductase complex (complex III or cytochrome b-c1 complex) that is part of the mitochondrial respiratory chain. The b-c1 complex mediates electron transfer from ubiquinol to cytochrome c. Contributes to the generation of a proton gradient across the mitochondrial membrane that is then used for ATP synthesis. The polypeptide is Cytochrome b (MT-CYB) (Pelecanoides georgicus (South Georgia diving petrel)).